Reading from the N-terminus, the 403-residue chain is Phosphoglycerate kinase (403 aa).

Residues 22–24, arginine 37, 60–63, arginine 119, and arginine 156 contribute to the substrate site; these read DLN and HLGR. Residues lysine 206, glycine 302, glutamate 333, and 359-362 contribute to the ATP site; that span reads GGDS.

It belongs to the phosphoglycerate kinase family. As to quaternary structure, monomer.

Its subcellular location is the cytoplasm. The enzyme catalyses (2R)-3-phosphoglycerate + ATP = (2R)-3-phospho-glyceroyl phosphate + ADP. It functions in the pathway carbohydrate degradation; glycolysis; pyruvate from D-glyceraldehyde 3-phosphate: step 2/5. The protein is Phosphoglycerate kinase (pgk) of Streptomyces coelicolor (strain ATCC BAA-471 / A3(2) / M145).